A 566-amino-acid polypeptide reads, in one-letter code: MAAKSQKTLVLLANLIKFPPLKAFSLLNSPNFHEFQHTHESISILLRLLLSGNLFSHAQSLLLQVISGKIHSQFFTSSSLLHYLTESETSKTKFRLYEVIINSYVQSQSLNLSISYFNEMVDNGFVPGSNCFNYLLTFVVGSSSFNQWWSFFNENKSKVVLDVYSFGILIKGCCEAGEIEKSFDLLIELTEFGFSPNVVIYTTLIDGCCKKGEIEKAKDLFFEMGKLGLVANERTYTVLINGLFKNGVKKQGFEMYEKMQEDGVFPNLYTYNCVMNQLCKDGRTKDAFQVFDEMRERGVSCNIVTYNTLIGGLCREMKLNEANKVVDQMKSDGINPNLITYNTLIDGFCGVGKLGKALSLCRDLKSRGLSPSLVTYNILVSGFCRKGDTSGAAKMVKEMEERGIKPSKVTYTILIDTFARSDNMEKAIQLRLSMEELGLVPDVHTYSVLIHGFCIKGQMNEASRLFKSMVEKNCEPNEVIYNTMILGYCKEGSSYRALKLLKEMEEKELAPNVASYRYMIEVLCKERKSKEAERLVEKMIDSGIDPSTSILSLISRAKNDSHVSSK.

PPR repeat units follow at residues 93–127 (KFRLYEVIINSYVQSQSLNLSISYFNEMVDNGFVP), 128–158 (GSNCFNYLLTFVVGSSSFNQWWSFFNENKSK), 162–196 (DVYSFGILIKGCCEAGEIEKSFDLLIELTEFGFSP), 197–231 (NVVIYTTLIDGCCKKGEIEKAKDLFFEMGKLGLVA), 232–266 (NERTYTVLINGLFKNGVKKQGFEMYEKMQEDGVFP), 267–301 (NLYTYNCVMNQLCKDGRTKDAFQVFDEMRERGVSC), 302–336 (NIVTYNTLIGGLCREMKLNEANKVVDQMKSDGINP), 337–371 (NLITYNTLIDGFCGVGKLGKALSLCRDLKSRGLSP), 372–406 (SLVTYNILVSGFCRKGDTSGAAKMVKEMEERGIKP), 407–441 (SKVTYTILIDTFARSDNMEKAIQLRLSMEELGLVP), 442–476 (DVHTYSVLIHGFCIKGQMNEASRLFKSMVEKNCEP), 477–511 (NEVIYNTMILGYCKEGSSYRALKLLKEMEEKELAP), and 512–546 (NVASYRYMIEVLCKERKSKEAERLVEKMIDSGIDP).

Belongs to the PPR family. P subfamily.

The polypeptide is Pentatricopeptide repeat-containing protein At4g11690 (Arabidopsis thaliana (Mouse-ear cress)).